The primary structure comprises 451 residues: Eukaryotic translation initiation factor 3 subunit E (451 aa).

The PCI domain occupies 256 to 425 (TDLFFSPAYI…GTVIMNHPPQ (170 aa)).

This sequence belongs to the eIF-3 subunit E family. As to quaternary structure, component of the eukaryotic translation initiation factor 3 (eIF-3) complex.

The protein localises to the cytoplasm. Component of the eukaryotic translation initiation factor 3 (eIF-3) complex, which is involved in protein synthesis of a specialized repertoire of mRNAs and, together with other initiation factors, stimulates binding of mRNA and methionyl-tRNAi to the 40S ribosome. The eIF-3 complex specifically targets and initiates translation of a subset of mRNAs involved in cell proliferation. This Aspergillus fumigatus (strain CBS 144.89 / FGSC A1163 / CEA10) (Neosartorya fumigata) protein is Eukaryotic translation initiation factor 3 subunit E (int6).